We begin with the raw amino-acid sequence, 343 residues long: Aspartate beta-hydroxylase domain-containing protein 2 (343 aa).

The Cytoplasmic portion of the chain corresponds to 1 to 31 (MWLEWLVAWSWSLDGLRDCIATGIQSVRDCD). A helical membrane pass occupies residues 32–52 (GTAVITVACLLILFVWYCYHV). Residues 53–343 (GREQPRPHVS…ALDFIFAPGR (291 aa)) lie on the Lumenal side of the membrane. Residues N77 and N185 are each glycosylated (N-linked (GlcNAc...) asparagine). 2-oxoglutarate is bound by residues W202 and S246. H257 is a Fe cation binding site. A 2-oxoglutarate-binding site is contributed by 266 to 268 (RCH). Residue H302 participates in Fe cation binding. R315 contributes to the 2-oxoglutarate binding site.

This sequence belongs to the aspartyl/asparaginyl beta-hydroxylase family. The cofactor is Fe cation.

The protein localises to the membrane. Its function is as follows. May function as 2-oxoglutarate-dependent dioxygenase. The polypeptide is Aspartate beta-hydroxylase domain-containing protein 2 (Asphd2) (Mus musculus (Mouse)).